A 277-amino-acid chain; its full sequence is Large ribosomal subunit protein uL2 (277 aa).

Disordered stretches follow at residues 24-55 and 221-277; these read ITTS…RHHG and RGSV…RKKK.

This sequence belongs to the universal ribosomal protein uL2 family. As to quaternary structure, part of the 50S ribosomal subunit. Forms a bridge to the 30S subunit in the 70S ribosome.

In terms of biological role, one of the primary rRNA binding proteins. Required for association of the 30S and 50S subunits to form the 70S ribosome, for tRNA binding and peptide bond formation. It has been suggested to have peptidyltransferase activity; this is somewhat controversial. Makes several contacts with the 16S rRNA in the 70S ribosome. This Listeria innocua serovar 6a (strain ATCC BAA-680 / CLIP 11262) protein is Large ribosomal subunit protein uL2.